We begin with the raw amino-acid sequence, 518 residues long: MTLAEFWPLCLRRLHDMLPHGQFAQWIAPLTVGEEGGVWVVYGKNQFACNMLKSQFAGKIEAVREELAAGRPAFVFKPGEGVRYEMAAVEGAVEPAEPSLHAGSEEMPVQEVLLDELPSEKPVKPAASKTAADILAERMKNLPHEPRQAAGPASRPESAAVAKARTDAQRDAEEARYEQTNLSPDYTFDTLVEGKGNRLAAAAAQAIAENPGQSYNPFFLYGSTGLGKTHLVQAVGNELLKNRPDAKVRYMHSDDYIRSFMKAVRNNTYDVFKQQYKQYDLLIIDDIQFIKGKDRTMEEFFYLYNHFHNEKKQLILTCDVLPAKIEGMDDRLKSRFSWGLTLELEPPELEMRIAILQKKAEAAGISIEDEAALFIANLIRSNVRELEGAFNRVGASSRFMNRPVIDIDLARTALQDIIAEKHKVITADIIIDAVAKYYRIKISDVLGKKRTRNIARPRQVAMSLTKELTTLSLPSIGDSFGGRDHTTVMHGIRAVAKLREEDPELAQDYEKLLILIQN.

A domain I, interacts with DnaA modulators region spans residues 1-73 (MTLAEFWPLC…REELAAGRPA (73 aa)). A domain II region spans residues 73-180 (AFVFKPGEGV…DAEEARYEQT (108 aa)). The tract at residues 144 to 180 (HEPRQAAGPASRPESAAVAKARTDAQRDAEEARYEQT) is disordered. Residues 164-177 (ARTDAQRDAEEARY) show a composition bias toward basic and acidic residues. Residues 181–397 (NLSPDYTFDT…GAFNRVGASS (217 aa)) form a domain III, AAA+ region region. ATP contacts are provided by Gly-225, Gly-227, Lys-228, and Thr-229. Residues 398–518 (RFMNRPVIDI…YEKLLILIQN (121 aa)) are domain IV, binds dsDNA.

Belongs to the DnaA family. In terms of assembly, oligomerizes as a right-handed, spiral filament on DNA at oriC.

It is found in the cytoplasm. Its function is as follows. Plays an essential role in the initiation and regulation of chromosomal replication. ATP-DnaA binds to the origin of replication (oriC) to initiate formation of the DNA replication initiation complex once per cell cycle. Binds the DnaA box (a 9 base pair repeat at the origin) and separates the double-stranded (ds)DNA. Forms a right-handed helical filament on oriC DNA; dsDNA binds to the exterior of the filament while single-stranded (ss)DNA is stabiized in the filament's interior. The ATP-DnaA-oriC complex binds and stabilizes one strand of the AT-rich DNA unwinding element (DUE), permitting loading of DNA polymerase. After initiation quickly degrades to an ADP-DnaA complex that is not apt for DNA replication. Binds acidic phospholipids. This is Chromosomal replication initiator protein DnaA from Neisseria gonorrhoeae (strain ATCC 700825 / FA 1090).